Reading from the N-terminus, the 283-residue chain is Myeloid differentiation primary response protein MyD88-B (283 aa).

A Death domain is found at 27 to 105 (RLCLYLNPNA…DILTDLAPLI (79 aa)). The intermediate domain stretch occupies residues 106–143 (EADCKKYLEKKHGPLPLQDDNVDSSEQYRITKSDDPYG). Positions 147–281 (ETFDAFICCC…WFWDKLAKAL (135 aa)) constitute a TIR domain.

The protein localises to the cytoplasm. Functionally, adapter protein involved in the Toll-like receptor and IL-1 receptor signaling pathway in the innate immune response. Activates expression of target genes in the Spemann organizer region during early embryonic development. Is required for normal axis formation. In Xenopus laevis (African clawed frog), this protein is Myeloid differentiation primary response protein MyD88-B (myd88-b).